Here is a 184-residue protein sequence, read N- to C-terminus: Exosome complex protein LRP1 (184 aa).

The tract at residues 157 to 184 is disordered; that stretch reads DSTDHIRKASSKKSKRLDKVGKKKGGKK. Basic residues predominate over residues 164-184; the sequence is KASSKKSKRLDKVGKKKGGKK.

This sequence belongs to the C1D family. As to quaternary structure, associates with nuclear form of the RNA exosome complex. Interacts with RRP4, RRP6, RRP45 and RRP46.

It localises to the nucleus. Its function is as follows. Required for exosome-dependent processing of pre-rRNA and small nucleolar RNA (snRNA) precursors. Involved in processing of 35S pre-rRNA at the A0, A1 and A2 sites. Required for activity of RRP6 in 7S pre-rRNA processing. Also has a role in 3'-processing of U4 and U5 small nuclear RNAs (snRNAs). Acts as a mRNA export factor. Mediates mRNA degradation upon UV irradiation. Maintains genome integrity where it is involved in both non-homologous end joining (NHEJ) and homologous recombination pathway repair of double strand DNA breaks. During NHEJ, required for joining 3'-overhanging ends. Also involved in telomere length regulation and maintenance. This chain is Exosome complex protein LRP1 (LRP1), found in Saccharomyces cerevisiae (strain ATCC 204508 / S288c) (Baker's yeast).